Here is a 123-residue protein sequence, read N- to C-terminus: Large ribosomal subunit protein uL14 (123 aa).

It belongs to the universal ribosomal protein uL14 family. Part of the 50S ribosomal subunit. Forms a cluster with proteins L3 and L19. In the 70S ribosome, L14 and L19 interact and together make contacts with the 16S rRNA in bridges B5 and B8.

Its function is as follows. Binds to 23S rRNA. Forms part of two intersubunit bridges in the 70S ribosome. The polypeptide is Large ribosomal subunit protein uL14 (Cronobacter sakazakii (strain ATCC BAA-894) (Enterobacter sakazakii)).